Reading from the N-terminus, the 2471-residue chain is Histidine protein kinase 1 (2471 aa).

The span at 1 to 10 shows a compositional bias: polar residues; it reads MSMNFFNSSE. Disordered stretches follow at residues 1 to 30, 52 to 75, and 395 to 415; these read MSMN…TEHY, ETKK…VPPS, and RQGS…FNIG. The segment covering 11 to 30 has biased composition (basic and acidic residues); that stretch reads PARDHKPDQEKETVMTTEHY. One can recognise a Protein kinase domain in the interval 358–636; that stretch reads EHPSQSTDQK…DCHSLLHDLI (279 aa). The 222-residue stretch at 2004–2225 folds into the Histidine kinase domain; the sequence is NMSHEIRTPF…TFYVSVIMDA (222 aa). Histidine 2007 carries the phosphohistidine; by autocatalysis modification. One can recognise a Response regulatory domain in the interval 2340 to 2466; it reads RILLAEDNLL…ELRRILTKVG (127 aa). 4-aspartylphosphate is present on aspartate 2394.

Post-translationally, the phosphorelay mechanism involves the sequential transfer of a phosphate group from His-2007 (H1) in the histidine kinase domain (transmitter domain) to Asp-2394 (D1) of the response regulatory domain (receiver domain). This transfer probably occurs between two CHK1 molecules, rather than intramolecularly.

The enzyme catalyses ATP + protein L-histidine = ADP + protein N-phospho-L-histidine.. Histidine kinase involved in a two-component signaling pathway that regulates cell wall mannan and glucan biosynthesis. Regulates quorum sensing as well as hyphal formation, biofilm formation, chlamidospore formation, and virulence. Plays a prominent role in phagocyte activation. Involved in the covering of the most potent pro-inflammatory cell wall molecules, the beta-glucans, underneath a dense mannan layer, so that the pathogen becomes partly invisible for immune cells such as phagocytes. In Candida albicans (strain SC5314 / ATCC MYA-2876) (Yeast), this protein is Histidine protein kinase 1 (CHK1).